We begin with the raw amino-acid sequence, 361 residues long: Septin-1 (361 aa).

One can recognise a Septin-type G domain in the interval 32–304 (KGFEFTLMVV…ENYRSDRLAK (273 aa)). Residues 42–49 (GESGLGKS) are G1 motif. GTP contacts are provided by residues 42–49 (GESGLGKS), Thr76, Gly102, 181–189 (KADCLTKKE), Gly239, and Arg254. The segment at 99 to 102 (DTPG) is G3 motif. Positions 180–183 (AKAD) are G4 motif. Ser319 is subject to Phosphoserine.

It belongs to the TRAFAC class TrmE-Era-EngA-EngB-Septin-like GTPase superfamily. Septin GTPase family. As to quaternary structure, likely part of a multicomponent septin complex that includes pnut. Interacts with pnut. Interacts with park. In terms of processing, ubiquitinated by park, leading to its degradation by the proteasome. In terms of tissue distribution, accumulates at the leading edge of the cleavage furrow in dividing cells and cellularizing embryos (at protein level). Also accumulates at the leading edge of the embryo epithelium during dorsal closure, in the embryonic neurons, and at the baso-lateral surfaces of ovarian follicle cells (at protein level).

It localises to the cytoplasm. In terms of biological role, involved in cytokinesis. May be involved in p53-dependent apoptosis. The chain is Septin-1 from Drosophila melanogaster (Fruit fly).